The sequence spans 295 residues: 4-hydroxy-tetrahydrodipicolinate synthase (295 aa).

Residue threonine 48 coordinates pyruvate. Catalysis depends on tyrosine 136, which acts as the Proton donor/acceptor. Catalysis depends on lysine 164, which acts as the Schiff-base intermediate with substrate. A pyruvate-binding site is contributed by isoleucine 206.

This sequence belongs to the DapA family. As to quaternary structure, homotetramer; dimer of dimers.

Its subcellular location is the cytoplasm. It catalyses the reaction L-aspartate 4-semialdehyde + pyruvate = (2S,4S)-4-hydroxy-2,3,4,5-tetrahydrodipicolinate + H2O + H(+). Its pathway is amino-acid biosynthesis; L-lysine biosynthesis via DAP pathway; (S)-tetrahydrodipicolinate from L-aspartate: step 3/4. Its function is as follows. Catalyzes the condensation of (S)-aspartate-beta-semialdehyde [(S)-ASA] and pyruvate to 4-hydroxy-tetrahydrodipicolinate (HTPA). This Actinobacillus pleuropneumoniae serotype 7 (strain AP76) protein is 4-hydroxy-tetrahydrodipicolinate synthase.